The chain runs to 99 residues: Large ribosomal subunit protein bL27 (99 aa).

Residues 1-21 (MAHKKGGGSTRNGRDSRAKRL) are disordered.

This sequence belongs to the bacterial ribosomal protein bL27 family.

The protein is Large ribosomal subunit protein bL27 of Thermomicrobium roseum (strain ATCC 27502 / DSM 5159 / P-2).